A 200-amino-acid chain; its full sequence is Holliday junction branch migration complex subunit RuvA (200 aa).

Residues 1 to 63 form a domain I region; sequence MIGKLSGKID…EEHIHLYGFL (63 aa). The interval 64-142 is domain II; it reads TLEEKNFFNL…KIFSSSAIIK (79 aa). Positions 142–146 are flexible linker; it reads KDSSN. The interval 147-200 is domain III; sequence ISSVEINEVIKALVNLGFTRFEAQNTVQGIITQNTKISIDELIKTALKNRNSSF.

Belongs to the RuvA family. As to quaternary structure, homotetramer. Forms an RuvA(8)-RuvB(12)-Holliday junction (HJ) complex. HJ DNA is sandwiched between 2 RuvA tetramers; dsDNA enters through RuvA and exits via RuvB. An RuvB hexamer assembles on each DNA strand where it exits the tetramer. Each RuvB hexamer is contacted by two RuvA subunits (via domain III) on 2 adjacent RuvB subunits; this complex drives branch migration. In the full resolvosome a probable DNA-RuvA(4)-RuvB(12)-RuvC(2) complex forms which resolves the HJ.

The protein resides in the cytoplasm. Its function is as follows. The RuvA-RuvB-RuvC complex processes Holliday junction (HJ) DNA during genetic recombination and DNA repair, while the RuvA-RuvB complex plays an important role in the rescue of blocked DNA replication forks via replication fork reversal (RFR). RuvA specifically binds to HJ cruciform DNA, conferring on it an open structure. The RuvB hexamer acts as an ATP-dependent pump, pulling dsDNA into and through the RuvAB complex. HJ branch migration allows RuvC to scan DNA until it finds its consensus sequence, where it cleaves and resolves the cruciform DNA. This Rickettsia typhi (strain ATCC VR-144 / Wilmington) protein is Holliday junction branch migration complex subunit RuvA.